Consider the following 605-residue polypeptide: Probable potassium transport system protein Kup 1 (605 aa).

A run of 12 helical transmembrane segments spans residues 16 to 36 (ALGLVFGDIGTSPIYTLTVIF), 46 to 66 (VFGILSLVFWTMTILVTMEYA), 97 to 117 (VAFAGFLSFVGVSLLLGDGVI), 138 to 158 (GLSTGTLVAIAAAIAIGLFSV), 166 to 186 (VAGAFGPIMAVWFSTLAVTGV), 212 to 232 (GLAGYFVLSEVILCSTGGEAL), 248 to 268 (WYFVFMALYLNYLGQGVFAIT), 287 to 307 (LYIPFLILTIMATIIASQSII), 339 to 359 (IYLGAVNWSLMVAVILVMLLF), 368 to 388 (AYGMAVTGSMTITGIMMIIVF), 397 to 417 (ALVALVITLIDAAYLLSTFSK), and 418 to 438 (IPHGAYWSLILASIPFVTIII).

This sequence belongs to the HAK/KUP transporter (TC 2.A.72) family.

Its subcellular location is the cell inner membrane. The enzyme catalyses K(+)(in) + H(+)(in) = K(+)(out) + H(+)(out). In terms of biological role, transport of potassium into the cell. Likely operates as a K(+):H(+) symporter. This is Probable potassium transport system protein Kup 1 from Geobacter metallireducens (strain ATCC 53774 / DSM 7210 / GS-15).